Reading from the N-terminus, the 2322-residue chain is Genome polyprotein (2322 aa).

The Peptidase C28 domain maps to 29 to 182 (MEFTLYNGEK…NPADVLVFVP (154 aa)). Residues Cys51, His148, and Asp163 each act as for leader protease activity in the active site. Disordered regions lie at residues 199–219 (RLRG…SGNT) and 238–262 (QLGD…HTNN). Gly202 is lipidated: N-myristoyl glycine; by host. 2 stretches are compositionally biased toward polar residues: residues 204–219 (GQSS…SGNT) and 238–251 (QLGD…SNEG). The span at 252–262 (STDTTSTHTNN) shows a compositional bias: low complexity. Residues 869–871 (RGD) carry the Cell attachment site motif. Positions 1189–1353 (NVHIANLCKV…DGYKINNKLD (165 aa)) constitute an SF3 helicase domain. 1217-1224 (GKSGQGKS) provides a ligand contact to ATP. Residues 1484–1504 (FEVVALCLTLLANIVIMLRQA) lie within the membrane without spanning it. The interval 1512 to 1574 (DDPLDGDVTL…PRAEGPYAGP (63 aa)) is disordered. Over residues 1539–1553 (FRERSPTEQGTREDA) the composition is skewed to basic and acidic residues. O-(5'-phospho-RNA)-tyrosine is present on residues Tyr1571, Tyr1594, and Tyr1618. The Peptidase C3 domain maps to 1642 to 1838 (APPTDLQKMV…YCSCVSRSML (197 aa)). Residue His1685 is the For protease 3C activity; Proton donor/acceptor of the active site. Catalysis depends on for protease 3C activity residues Asp1723 and Cys1802. Residues 1868–1876 (MRKTKLAPT) carry the Nuclear localization signal motif. The 119-residue stretch at 2086-2204 (KNVWDVDYSA…ASDYDLDFEA (119 aa)) folds into the RdRp catalytic domain.

This sequence belongs to the picornaviruses polyprotein family. Interacts with host ISG15. In terms of assembly, interacts (via R-G-D motif) with host ITGAV/ITGB6. Interacts with host MAVS; this interaction inhibits binding of host TRAF3 to MAVS, thereby suppressing interferon-mediated responses. As to quaternary structure, forms homooligomers. Homohexamer. Interacts with host VIM. Interacts with host BECN1. In terms of assembly, interacts with host DCTN3. As to quaternary structure, interacts with RNA-dependent RNA polymerase; this interaction allows 3B-1 to binds 2 polymerases and act as a primer. It also allows the recruitment of the RNA-dependent RNA polymerase to host membranes. Interacts with RNA-dependent RNA polymerase; this interaction allows 3B-2 to act as a primer. In terms of assembly, interacts with RNA-dependent RNA polymerase; this interaction allows 3B-3 to act as a primer. As to quaternary structure, interacts with 3B-1; this interaction allows 3B-1 to binds 2 polymerases and act as a primer. It also allows the recruitment of the RNA-dependent RNA polymerase to host membranes. Interacts with 3B-2; this interaction allows 3B-2 to act as a primer. Interacts with 3B-3; this interaction allows 3B-3 to act as a primer. Removes six residues from its own C-terminus, generating sLb(pro). In terms of processing, specific enzymatic cleavages in vivo by the viral proteases yield a variety of precursors and mature proteins. The polyprotein seems to be cotranslationally cleaved at the 2A/2B junction by a ribosomal skip from one codon to the next without formation of a peptide bond. This process would release the L-P1-2A peptide from the translational complex. Post-translationally, during virion maturation, immature virions are rendered infectious following cleavage of VP0 into VP4 and VP2. This maturation seems to be an autocatalytic event triggered by the presence of RNA in the capsid and is followed by a conformational change of the particle. Myristoylation is required during RNA encapsidation and formation of the mature virus particle. In terms of processing, uridylylated by the polymerase and covalently linked to the 5'-end of genomic RNA. These uridylylated forms act as a nucleotide-peptide primer for the polymerase.

Its subcellular location is the host nucleus. It localises to the host cytoplasm. The protein resides in the virion. The protein localises to the host endoplasmic reticulum membrane. It is found in the host cytoplasmic vesicle membrane. It carries out the reaction Autocatalytically cleaves itself from the polyprotein of the foot-and-mouth disease virus by hydrolysis of a Lys-|-Gly bond, but then cleaves host cell initiation factor eIF-4G at bonds -Gly-|-Arg- and -Lys-|-Arg-.. It catalyses the reaction a ribonucleoside 5'-triphosphate + H2O = a ribonucleoside 5'-diphosphate + phosphate + H(+). The catalysed reaction is RNA(n) + a ribonucleoside 5'-triphosphate = RNA(n+1) + diphosphate. The enzyme catalyses Selective cleavage of Gln-|-Gly bond in the poliovirus polyprotein. In other picornavirus reactions Glu may be substituted for Gln, and Ser or Thr for Gly.. Its function is as follows. Autocatalytically cleaves itself from the polyprotein at the L/VP0 junction. Also cleaves the host translation initiation factors EIF4G1 and EIF4G3, in order to shut off the capped cellular mRNA transcription. Plays a role in counteracting host innate antiviral response using diverse mechanisms. Possesses a deubiquitinase activity acting on both 'Lys-48' and 'Lys-63'-linked polyubiquitin chains. In turn, inhibits the ubiquitination and subsequent activation of key signaling molecules of type I IFN response such as host RIGI, TBK1, TRAF3 and TRAF6. Inhibits host NF-kappa-B activity by inducing a decrease in RELA mRNA levels. Cleaves a peptide bond in the C-terminus of host ISG15, resulting in the damaging of this modifier that can no longer be attached to target proteins. Also cleaves host G3BP1 and G3BP2 in order to inhibit cytoplasmic stress granules assembly. In terms of biological role, lies on the inner surface of the capsid shell. After binding to the host receptor, the capsid undergoes conformational changes. Capsid protein VP4 is released, capsid protein VP1 N-terminus is externalized, and together, they shape a pore in the host membrane through which the viral genome is translocated into the host cell cytoplasm. After genome has been released, the channel shrinks. Functionally, forms an icosahedral capsid of pseudo T=3 symmetry with capsid proteins VP1 and VP3. The capsid is composed of 60 copies of each capsid protein organized in the form of twelve pentamers and encloses the viral positive strand RNA genome. Upon acidifcation in the endosome, dissociates into pentamers. Forms an icosahedral capsid of pseudo T=3 symmetry with capsid proteins VP0 and VP3. The capsid is composed of 60 copies of each capsid protein organized in the form of twelve pentamers and encloses the viral positive strand RNA genome. Upon acidifcation in the endosome, dissociates into pentamers. Its function is as follows. Forms an icosahedral capsid of pseudo T=3 symmetry with capsid proteins VP2 and VP3. The capsid is composed of 60 copies of each capsid protein organized in the form of twelve pentamers and encloses the viral positive strand RNA genome. Mediates cell entry by attachment to an integrin receptor, usually host ITGAV/ITGB6. In addition, targets host MAVS to suppress type I IFN pathway. Upon acidifcation in the endosome, dissociates into pentamers. In terms of biological role, mediates self-processing of the polyprotein by a translational effect termed 'ribosome skipping'. Mechanistically, 2A-mediated cleavage occurs between the C-terminal glycine and the proline of the downstream protein 2B. In the case of foot-and-mouth disease virus, the 2A oligopeptide is post-translationally 'trimmed' from the C-terminus of the upstream protein 1D by 3C proteinase. Functionally, plays an essential role in the virus replication cycle by acting as a viroporin. Creates a pore in the host endoplasmic reticulum and as a consequence releases Ca2+ in the cytoplasm of infected cell. In turn, high levels of cytoplasmic calcium may trigger membrane trafficking and transport of viral ER-associated proteins to viroplasms, sites of viral genome replication. Associates with and induces structural rearrangements of intracellular membranes. Triggers host autophagy by interacting with host BECN1 and thereby promotes viral replication. Participates in viral replication and interacts with host DHX9. Displays RNA-binding, nucleotide binding and NTPase activities. May play a role in virion morphogenesis and viral RNA encapsidation by interacting with the capsid protein VP3. Its function is as follows. Plays important roles in virus replication, virulence and host range. Cooperates with host DDX56 to inhibit IRF3 nuclear translocation and subsequent type I interferon production. In terms of biological role, covalently linked to the 5'-end of both the positive-strand and negative-strand genomic RNAs. Acts as a genome-linked replication primer. Functionally, cysteine protease that generates mature viral proteins from the precursor polyprotein. In addition to its proteolytic activity, binds to viral RNA and thus influences viral genome replication. RNA and substrate bind cooperatively to the protease. RNA-directed RNA polymerase 3D-POL replicates genomic and antigenomic RNA by recognizing replications specific signals. Covalently attaches UMP to a tyrosine of VPg, which is used to prime RNA synthesis. The positive stranded RNA genome is first replicated at virus induced membranous vesicles, creating a dsRNA genomic replication form. This dsRNA is then used as template to synthesize positive stranded RNA genomes. ss(+)RNA genomes are either translated, replicated or encapsidated. In Foot-and-mouth disease virus (isolate Swine/Taiwan/OTai/1997 serotype O) (FMDV), this protein is Genome polyprotein.